The chain runs to 767 residues: Phosphoribosylformylglycinamidine synthase subunit PurL (767 aa).

H46 is an active-site residue. ATP-binding residues include Y49 and K88. Mg(2+) is bound at residue E90. Substrate contacts are provided by residues 91–94 and R113; that span reads SHNH. The Proton acceptor role is filled by H92. Mg(2+) is bound at residue D114. Q237 contributes to the substrate binding site. Position 265 (D265) interacts with Mg(2+). 309–311 lines the substrate pocket; it reads ESQ. The ATP site is built by D498 and G535. A Mg(2+)-binding site is contributed by N536. S538 contacts substrate.

Belongs to the FGAMS family. As to quaternary structure, monomer. Part of the FGAM synthase complex composed of 1 PurL, 1 PurQ and 2 PurS subunits.

The protein localises to the cytoplasm. It catalyses the reaction N(2)-formyl-N(1)-(5-phospho-beta-D-ribosyl)glycinamide + L-glutamine + ATP + H2O = 2-formamido-N(1)-(5-O-phospho-beta-D-ribosyl)acetamidine + L-glutamate + ADP + phosphate + H(+). The protein operates within purine metabolism; IMP biosynthesis via de novo pathway; 5-amino-1-(5-phospho-D-ribosyl)imidazole from N(2)-formyl-N(1)-(5-phospho-D-ribosyl)glycinamide: step 1/2. Part of the phosphoribosylformylglycinamidine synthase complex involved in the purines biosynthetic pathway. Catalyzes the ATP-dependent conversion of formylglycinamide ribonucleotide (FGAR) and glutamine to yield formylglycinamidine ribonucleotide (FGAM) and glutamate. The FGAM synthase complex is composed of three subunits. PurQ produces an ammonia molecule by converting glutamine to glutamate. PurL transfers the ammonia molecule to FGAR to form FGAM in an ATP-dependent manner. PurS interacts with PurQ and PurL and is thought to assist in the transfer of the ammonia molecule from PurQ to PurL. The chain is Phosphoribosylformylglycinamidine synthase subunit PurL from Anaeromyxobacter sp. (strain Fw109-5).